We begin with the raw amino-acid sequence, 844 residues long: Beta-mannosidase B (844 aa).

The active-site Proton donor is Glu432.

This sequence belongs to the glycosyl hydrolase 2 family. Beta-mannosidase B subfamily.

The catalysed reaction is Hydrolysis of terminal, non-reducing beta-D-mannose residues in beta-D-mannosides.. It participates in glycan metabolism; N-glycan degradation. Exoglycosidase that cleaves the single beta-linked mannose residue from the non-reducing end of beta-mannosidic oligosaccharides of various complexity and length. Prefers mannobiose over mannotriose and has no activity against polymeric mannan. Is also severely restricted by galactosyl substitutions at the +1 subsite. This Aspergillus oryzae (strain ATCC 42149 / RIB 40) (Yellow koji mold) protein is Beta-mannosidase B (mndB).